The sequence spans 404 residues: Probable eukaryotic initiation factor 4A (404 aa).

The interval 1-28 is disordered; sequence MAQQGKVEPQDQDSFLDDQPGIRPIPSF. The Q motif motif lies at 26 to 54; the sequence is PSFDDMPLHQNLLRGIYSHGFEKPSSIQQ. Residues 57 to 231 enclose the Helicase ATP-binding domain; the sequence is IVPFTRGGDI…KKFMRDPTRI (175 aa). An ATP-binding site is contributed by 70 to 77; it reads AQSGTGKT. The DEAD box motif lies at 179-182; the sequence is DEAD. Residues 242–402 form the Helicase C-terminal domain; it reads GIKQFFIAVE…ELPVDFAAYL (161 aa).

The protein belongs to the DEAD box helicase family. eIF4A subfamily. As to quaternary structure, eIF4F is a multi-subunit complex, the composition of which varies with external and internal environmental conditions. It is composed of at least EIF4A, EIF4E and EIF4G.

It carries out the reaction ATP + H2O = ADP + phosphate + H(+). Its function is as follows. ATP-dependent RNA helicase which is a subunit of the eIF4F complex involved in cap recognition and is required for mRNA binding to ribosome. In the current model of translation initiation, eIF4A unwinds RNA secondary structures in the 5'-UTR of mRNAs which is necessary to allow efficient binding of the small ribosomal subunit, and subsequent scanning for the initiator codon. In Trypanosoma brucei brucei (strain 927/4 GUTat10.1), this protein is Probable eukaryotic initiation factor 4A.